A 933-amino-acid chain; its full sequence is uncharacterized protein (933 aa).

Positions 244 to 255 are enriched in basic and acidic residues; the sequence is KKDIGAKPKPVD. Disordered stretches follow at residues 244-277 and 343-364; these read KKDIGAKPKPVDDVSPQPVRARTPPENTVVELPD and SAPHQPSSQHAQMGRHSQEWKG. The segment covering 343-353 has biased composition (polar residues); that stretch reads SAPHQPSSQHA. A helical transmembrane segment spans residues 771-791; sequence VIHGMVLMFAGGKLLFGGCVL. The span at 890–907 shows a compositional bias: basic and acidic residues; it reads DKIEKEPPPSPEKVKPPE. A disordered region spans residues 890 to 933; that stretch reads DKIEKEPPPSPEKVKPPEIELQPFTKMRRSSKKTAGFKKLNSKK. Residues 915 to 933 show a composition bias toward basic residues; that stretch reads KMRRSSKKTAGFKKLNSKK.

The protein localises to the membrane. This is an uncharacterized protein from Mus musculus (Mouse).